The primary structure comprises 208 residues: Small ribosomal subunit protein eS8 (208 aa).

The disordered stretch occupies residues 1–23 (MGISRDSAHKRRATGGKRKSLRK). Residues 8-23 (AHKRRATGGKRKSLRK) show a composition bias toward basic residues.

This sequence belongs to the eukaryotic ribosomal protein eS8 family. In terms of assembly, component of the small ribosomal subunit. Identified in a IGF2BP1-dependent mRNP granule complex containing untranslated mRNAs. Part of the small subunit (SSU) processome, composed of more than 70 proteins and the RNA chaperone small nucleolar RNA (snoRNA) U3.

The protein localises to the cytoplasm. The protein resides in the membrane. It localises to the nucleus. It is found in the nucleolus. In terms of biological role, component of the small ribosomal subunit. The ribosome is a large ribonucleoprotein complex responsible for the synthesis of proteins in the cell. Part of the small subunit (SSU) processome, first precursor of the small eukaryotic ribosomal subunit. During the assembly of the SSU processome in the nucleolus, many ribosome biogenesis factors, an RNA chaperone and ribosomal proteins associate with the nascent pre-rRNA and work in concert to generate RNA folding, modifications, rearrangements and cleavage as well as targeted degradation of pre-ribosomal RNA by the RNA exosome. This chain is Small ribosomal subunit protein eS8 (RpS8), found in Drosophila melanogaster (Fruit fly).